The chain runs to 610 residues: Autophagy-related protein 22-1 (610 aa).

Residues 1–29 form a disordered region; sequence MIFTSTPPAPPPADAQQRQPRYPGEDTTP. The helical transmembrane segment at 41-61 threads the bilayer; the sequence is YGIAAEVFAVCGVGSFLPLTL. Asparagine 90 carries an N-linked (GlcNAc...) asparagine glycan. 3 consecutive transmembrane segments (helical) span residues 120-140, 153-173, and 177-197; these read SFAMYTFSLAVLVQALTLISF, LLLTFGLIGSVSSMLFVFISP, and ILGAILVVIGVTCLGSSFVVL. The segment at 216 to 242 is disordered; sequence KTEGEELPHLDSSGEYTRSGSFNRGDN. A compositionally biased stretch (polar residues) spans 229–239; that stretch reads GEYTRSGSFNR. The next 4 helical transmembrane spans lie at 277 to 297, 310 to 330, 379 to 399, and 415 to 435; these read GVGLGYCAAVLVQVLSILLLF, TLPLRFVLLLVGIWWFSFTVV, VVIFLIAWFLLSDAMATVSGT, and VGLLSITATLSGMTGAFLWPV. The N-linked (GlcNAc...) asparagine glycan is linked to asparagine 445. 4 helical membrane-spanning segments follow: residues 450–470, 485–507, 527–547, and 550–570; these read LCIALFEIIPLYGMLAYIPLV, FPLGIVHGLVSGGLSSYCRSFFG, KGSSFIGPAVVGVLIDATGQV, and GFFFIAVLIVLPIPLIWMVNA. A disordered region spans residues 586–610; it reads KSHGENSSEFGHPSEEAEGLLARNP. The N-linked (GlcNAc...) asparagine glycan is linked to asparagine 591.

It belongs to the ATG22 family.

Its subcellular location is the vacuole membrane. Vacuolar effluxer which mediate the efflux of amino acids resulting from autophagic degradation. The release of autophagic amino acids allows the maintenance of protein synthesis and viability during nitrogen starvation. The chain is Autophagy-related protein 22-1 (atg22-1) from Aspergillus clavatus (strain ATCC 1007 / CBS 513.65 / DSM 816 / NCTC 3887 / NRRL 1 / QM 1276 / 107).